Here is a 432-residue protein sequence, read N- to C-terminus: Glutamyl-tRNA reductase (432 aa).

Residues 50–53 (TCNR), serine 110, 115–117 (ETQ), and glutamine 121 contribute to the substrate site. The active-site Nucleophile is cysteine 51. Residue 190-195 (GAGEMS) coordinates NADP(+).

This sequence belongs to the glutamyl-tRNA reductase family. In terms of assembly, homodimer.

It catalyses the reaction (S)-4-amino-5-oxopentanoate + tRNA(Glu) + NADP(+) = L-glutamyl-tRNA(Glu) + NADPH + H(+). The protein operates within porphyrin-containing compound metabolism; protoporphyrin-IX biosynthesis; 5-aminolevulinate from L-glutamyl-tRNA(Glu): step 1/2. Functionally, catalyzes the NADPH-dependent reduction of glutamyl-tRNA(Glu) to glutamate 1-semialdehyde (GSA). In Aliarcobacter butzleri (strain RM4018) (Arcobacter butzleri), this protein is Glutamyl-tRNA reductase.